Reading from the N-terminus, the 363-residue chain is Transcription factor IIIA (363 aa).

C2H2-type zinc fingers lie at residues phenylalanine 38–histidine 62, phenylalanine 68–histidine 92, phenylalanine 98–histidine 123, tyrosine 130–histidine 154, phenylalanine 160–histidine 184, tyrosine 187–histidine 211, valine 215–histidine 237, tyrosine 244–histidine 269, and phenylalanine 275–histidine 299. Positions proline 301–histidine 363 are disordered. The segment covering serine 338–glutamate 350 has biased composition (low complexity).

Its subcellular location is the nucleus. Involved in ribosomal large subunit biogenesis. Binds the approximately 50 base pairs internal control region (ICR) of 5S ribosomal RNA genes. It is required for their RNA polymerase III-dependent transcription and may also maintain the transcription of other genes. Also binds the transcribed 5S RNA's. This Rattus norvegicus (Rat) protein is Transcription factor IIIA (Gtf3a).